The primary structure comprises 423 residues: Protein FAM43A (423 aa).

The span at 263–283 (EQELQEEEEEEQPEGCPEEEE) shows a compositional bias: acidic residues. 3 disordered regions span residues 263–298 (EQEL…EAEA), 321–344 (RGEA…LLLG), and 382–423 (LSGD…PHSG). Gly residues predominate over residues 323-335 (EALGGGGGSLGPG). Positions 383-393 (SGDSTGSESSI) are enriched in low complexity. The segment covering 401–411 (TSATAGDSSRQ) has biased composition (polar residues).

Belongs to the FAM43 family.

The chain is Protein FAM43A (FAM43A) from Homo sapiens (Human).